The chain runs to 539 residues: Tetracenomycin B2 monooxygenase-dioxygenase (539 aa).

Residues Leu15, Glu35, Gln128, and Leu152 each contribute to the FAD site. Tyr231 functions as the Proton acceptor in the catalytic mechanism. Asp313 provides a ligand contact to FAD.

It belongs to the PheA/TfdB FAD monooxygenase family. It depends on FAD as a cofactor.

It catalyses the reaction tetracenomycin B2 + 2 NADPH + 2 O2 + 2 H(+) = 8-demethyltetracenomycin C + 2 NADP(+) + H2O. The enzyme catalyses tetracenomycin A2 + 2 NADPH + 2 O2 + 2 H(+) = tetracenomycin C + 2 NADP(+) + H2O. The protein operates within antibiotic biosynthesis. Involved in the biosynthesis of elloramycin, an antitumor polyketide. In vivo, probably catalyzes the triple hydroxylation of 8-demethyltetracenomycin A2 (tetracenomycin B2) at positions C-4, C-4a and C-12a to give 8-demethyltetracenomycin C (8-DMTC). In vitro, catalyzes the triple hydroxylation of tetracenomycin A2 (TCM A2) to give tetracenomycin C (TCM C). Uses NADPH as an electron donor and requires molecular O(2). The chain is Tetracenomycin B2 monooxygenase-dioxygenase from Streptomyces olivaceus.